Reading from the N-terminus, the 395-residue chain is Vibriobactin-specific isochorismate synthase (395 aa).

This sequence belongs to the isochorismate synthase family.

It catalyses the reaction chorismate = isochorismate. Its pathway is siderophore biosynthesis; vibriobactin biosynthesis. The protein is Vibriobactin-specific isochorismate synthase (vibC) of Vibrio cholerae serotype O1 (strain ATCC 39315 / El Tor Inaba N16961).